The following is a 248-amino-acid chain: Calpain small subunit 2 (248 aa).

Positions 89, 92, 94, 117, 132, 134, 136, 138, 143, 162, 164, 166, and 205 each coordinate Ca(2+). EF-hand domains follow at residues 119–152, 149–184, 185–213, and 214–248; these read FSLD…NNIK, NNIK…AGFQ, LNEQ…ISCL, and VRLD…TMYS.

As to quaternary structure, heterodimer of a large (catalytic) and a small (regulatory) subunit.

It localises to the cytoplasm. The protein localises to the cell membrane. Calcium-regulated non-lysosomal thiol-protease which catalyzes limited proteolysis of substrates involved in cytoskeletal remodeling and signal transduction. This small subunit may act as a tissue-specific chaperone of the large subunit, possibly by helping it fold into its correct conformation for activity. The sequence is that of Calpain small subunit 2 (CAPNS2) from Homo sapiens (Human).